Reading from the N-terminus, the 109-residue chain is Latartoxin-2a (109 aa).

The signal sequence occupies residues 1 to 19 (MKVLVIIALCLVAFQSALS). Residues 20–37 (KKIENFESYIEDLKSEAR) constitute a propeptide, removed in mature form. The Processing quadruplet motif motif lies at 34–37 (SEAR). Cystine bridges form between cysteine 39-cysteine 56, cysteine 46-cysteine 67, cysteine 55-cysteine 81, cysteine 69-cysteine 79, and cysteine 72-cysteine 93. Valine 108 is modified (valine amide).

Belongs to the neurotoxin 19 (CSTX) family. 11 (latartoxin) subfamily. Contains 5 disulfide bonds. In terms of processing, cleavage of the propeptide depends on the processing quadruplet motif (XXXR, with at least one of X being E). Expressed by the venom gland.

Its subcellular location is the secreted. Insect toxin. Causes paralysis in larvae of C.vicina by depolarizing membranes at the neuromuscular junction. In Lachesana tarabaevi (Spider), this protein is Latartoxin-2a.